The primary structure comprises 451 residues: MPKNKKRNTPHRGSSAGGGGSGAAAATAATAGGQHRNVQPFSDEDASIETMSHCSGYSDPSSFAEDGPEVLDEEGTQEDLEYKLKGLIDLTLDKSAKTRQAALEGIKNALASKMLYEFILERRMTLTDSIERCLKKGKSDEQRAAAALASVLCIQLGPGIESEEILKTLGPILKKIICDGSASMQARQTCATCFGVCCFIATDDITELYSTLECLENIFTKSYLKEKDTTVICSTPNTVLHISSLLAWTLLLTICPINEVKKKLEMHFHKLPSLLSCDDVNMRIAAGESLALLFELARGIESDFFYEDMESLTQMLRALATDGNKHRAKVDKRKQRSVFRDVLRAVEERDFPTETIKFGPERMYIDCWVKKHTYDTFKEVLGSGMQYHLQSNEFLRNVFELGPPVMLDAATLKTMKISRFERHLYNSAAFKARTKARSKCRDKRADVGEFF.

Basic residues predominate over residues 1 to 10 (MPKNKKRNTP). Positions 1–69 (MPKNKKRNTP…PSSFAEDGPE (69 aa)) are disordered. The span at 23–33 (AAAATAATAGG) shows a compositional bias: low complexity. The span at 49–61 (ETMSHCSGYSDPS) shows a compositional bias: polar residues.

This sequence belongs to the IFRD family. In terms of assembly, interacts with PSIP1/LEDGF. Expressed in a variety of tissues.

Its function is as follows. Could play a role in regulating gene activity in the proliferative and/or differentiative pathways induced by NGF. May be an autocrine factor that attenuates or amplifies the initial ligand-induced signal. The protein is Interferon-related developmental regulator 1 (IFRD1) of Homo sapiens (Human).